We begin with the raw amino-acid sequence, 305 residues long: Sulfate adenylyltransferase subunit 2 (305 aa).

The protein belongs to the PAPS reductase family. CysD subfamily. In terms of assembly, heterodimer composed of CysD, the smaller subunit, and CysN.

It carries out the reaction sulfate + ATP + H(+) = adenosine 5'-phosphosulfate + diphosphate. It functions in the pathway sulfur metabolism; hydrogen sulfide biosynthesis; sulfite from sulfate: step 1/3. In terms of biological role, with CysN forms the ATP sulfurylase (ATPS) that catalyzes the adenylation of sulfate producing adenosine 5'-phosphosulfate (APS) and diphosphate, the first enzymatic step in sulfur assimilation pathway. APS synthesis involves the formation of a high-energy phosphoric-sulfuric acid anhydride bond driven by GTP hydrolysis by CysN coupled to ATP hydrolysis by CysD. In Stutzerimonas stutzeri (strain A1501) (Pseudomonas stutzeri), this protein is Sulfate adenylyltransferase subunit 2.